Consider the following 502-residue polypeptide: Maturase K (502 aa).

It belongs to the intron maturase 2 family. MatK subfamily.

Its subcellular location is the plastid. The protein localises to the chloroplast. In terms of biological role, usually encoded in the trnK tRNA gene intron. Probably assists in splicing its own and other chloroplast group II introns. The chain is Maturase K from Ipomoea purpurea (Common morning glory).